A 326-amino-acid chain; its full sequence is DNA-directed RNA polymerase subunit alpha (326 aa).

The tract at residues 1 to 232 (MQSATEFLKP…SQLSVFADLE (232 aa)) is alpha N-terminal domain (alpha-NTD). The segment at 246–326 (VDPLLLRPVD…NWPPAGLERP (81 aa)) is alpha C-terminal domain (alpha-CTD).

This sequence belongs to the RNA polymerase alpha chain family. Homodimer. The RNAP catalytic core consists of 2 alpha, 1 beta, 1 beta' and 1 omega subunit. When a sigma factor is associated with the core the holoenzyme is formed, which can initiate transcription.

It catalyses the reaction RNA(n) + a ribonucleoside 5'-triphosphate = RNA(n+1) + diphosphate. Functionally, DNA-dependent RNA polymerase catalyzes the transcription of DNA into RNA using the four ribonucleoside triphosphates as substrates. This is DNA-directed RNA polymerase subunit alpha from Thiobacillus denitrificans (strain ATCC 25259 / T1).